Consider the following 255-residue polypeptide: Pyrroloquinoline-quinone synthase (255 aa).

Belongs to the PqqC family.

It carries out the reaction 6-(2-amino-2-carboxyethyl)-7,8-dioxo-1,2,3,4,7,8-hexahydroquinoline-2,4-dicarboxylate + 3 O2 = pyrroloquinoline quinone + 2 H2O2 + 2 H2O + H(+). It functions in the pathway cofactor biosynthesis; pyrroloquinoline quinone biosynthesis. Ring cyclization and eight-electron oxidation of 3a-(2-amino-2-carboxyethyl)-4,5-dioxo-4,5,6,7,8,9-hexahydroquinoline-7,9-dicarboxylic-acid to PQQ. This is Pyrroloquinoline-quinone synthase from Acinetobacter baylyi (strain ATCC 33305 / BD413 / ADP1).